The chain runs to 202 residues: Large ribosomal subunit protein bL25 (202 aa).

Residues 182–202 are disordered; the sequence is QTAPEEEEGTAAETTEPELAE. Residues 185 to 202 show a composition bias toward acidic residues; the sequence is PEEEEGTAAETTEPELAE.

The protein belongs to the bacterial ribosomal protein bL25 family. CTC subfamily. In terms of assembly, part of the 50S ribosomal subunit; part of the 5S rRNA/L5/L18/L25 subcomplex. Contacts the 5S rRNA. Binds to the 5S rRNA independently of L5 and L18.

Functionally, this is one of the proteins that binds to the 5S RNA in the ribosome where it forms part of the central protuberance. The polypeptide is Large ribosomal subunit protein bL25 (Enterococcus faecalis (strain ATCC 700802 / V583)).